The primary structure comprises 370 residues: Cyanuric acid amidohydrolase (370 aa).

Positions methionine 1–asparagine 103 are RU A. Substrate is bound by residues arginine 51 and serine 82–glycine 83. Residues arginine 113 to arginine 250 form an RU B region. Lysine 163 is an active-site residue. Residues arginine 195 and serine 233–alanine 234 each bind substrate. The Nucleophile role is filled by serine 233. Residues leucine 256–alanine 370 form an RU C region. Position 303 (glutamate 303) interacts with Mg(2+). Substrate-binding positions include arginine 330 and serine 349 to glycine 350. The Mg(2+) site is built by serine 352, glutamine 355, glycine 356, proline 357, and glycine 360.

It belongs to the cyclic amide hydrolase (CyAH) family. As to quaternary structure, homotetramer.

The catalysed reaction is cyanurate + H2O = 1-carboxybiuret + H(+). The protein operates within xenobiotic degradation; atrazine degradation; biuret from cyanurate: step 1/1. Inhibited by barbituric acid. Its function is as follows. Responsible for the hydrolysis of cyanuric acid, an intermediate formed during catabolism of s-triazine based compounds in herbicides such as atrazine and polymers such as melamine. Catalyzes the hydrolytic opening of the s-triazine ring of cyanuric acid (2,4,6-trihydroxy-s-triazine) to yield carbon dioxide and carboxybiuret, which spontaneously decarboxylates to biuret. The polypeptide is Cyanuric acid amidohydrolase (trzD) (Pseudomonas sp).